A 412-amino-acid chain; its full sequence is MLIVNREEYSKSDFDLRLQAYEEMEQFQEAAGNRFALCLKDPFDIITLVFFLKEKKSSVLLIHEDTPKETAIEMAKRANCIGILYGENSDFTKLEAVNYLAEEPSLLQYSSGTTGEPKLIRRAWTEVDTEIKVYNEALNCDIDEVPIVMAPVSHSYGLICGTLSAITRGSKPIIITNKNPKFALNIVRNTEKHIVYAVPLMLHIMGSFPQGTFQFHKIMTSGAPLPEALFYKLKETTTYMMQQYGCSEAGCISICHDMKSHLDLGNPLPHASISIGSDENAPEEIIVKMNDKEIFTKDLGYKSERGLHFMGRMDDVINVSGLKVFPIEVEETMLRLEGVQEAIVYRGKHPVMGEIVKAKVISHIDPVQIREWCMQHLPSYKVPHEIESVTEIPKNKTGKVSRKLLEMGEVTT.

It belongs to the ATP-dependent AMP-binding enzyme family.

The catalysed reaction is holo-[aryl-carrier protein] + 3,4-dihydroxybenzoate + ATP = 3,4-dihydroxybenzoyl-[aryl-carrier protein] + AMP + diphosphate. It catalyses the reaction 3,4-dihydroxybenzoate + ATP + H(+) = 3,4-dihydroxybenzoyl-5'-AMP + diphosphate. It carries out the reaction 3,4-dihydroxybenzoyl-5'-AMP + holo-[aryl-carrier protein] = 3,4-dihydroxybenzoyl-[aryl-carrier protein] + AMP + H(+). Its pathway is siderophore biosynthesis; petrobactin biosynthesis. ATP-pyrophosphate exchange is inhibited in vitro by nonhydrolyzable acylsulfamate analogs that mimic the AsbC-bound intermediate 3,4-dihydroxybenzoyl-AMP. Functionally, involved in the biosynthesis of petrobactin, a catecholate siderophore that functions in both iron acquisition and virulence. Catalyzes the adenylation of 3,4-dihydroxybenzoate (3,4-DHBA) to the corresponding AMP ester, followed by the transfer of the activated unit to the phosphopantetheine thiol of the aryl-carrier protein AsbD. The chain is 3,4-dihydroxybenzoate--[aryl-carrier protein] ligase from Bacillus anthracis.